We begin with the raw amino-acid sequence, 331 residues long: XylDLEGF operon transcriptional activator 1 (331 aa).

The HTH araC/xylS-type domain maps to 214-315; that stretch reads ERVVQFIEEN…GELPSDTLRR (102 aa). DNA-binding regions (H-T-H motif) lie at residues 231-252 and 282-305; these read ERLA…EKHA and VTEM…RSTF.

It localises to the cytoplasm. In terms of biological role, regulatory protein of the TOL plasmid xyl operons. XylS activates the xylXYZLTEGFJQKIH operon required for the degradation of toluene, m-xylene and p-xylene. The chain is XylDLEGF operon transcriptional activator 1 (xylS1) from Pseudomonas putida (Arthrobacter siderocapsulatus).